Consider the following 392-residue polypeptide: uncharacterized protein (392 aa).

One can recognise a J domain in the interval 7 to 76; sequence TEYYDLLGIS…RSQYDQFGKE (70 aa). S108 is subject to Phosphoserine.

This is an uncharacterized protein from Schizosaccharomyces pombe (strain 972 / ATCC 24843) (Fission yeast).